Consider the following 147-residue polypeptide: Protein LOL4 (147 aa).

Putative zinc finger stretches follow at residues 4 to 34 (QLICSGCRRVVQYRRGVAGVCCPGCNTLTAV), 44 to 74 (ELICSGCPTLLFYNRGASNIRCPSCNRLNST), and 82 to 112 (HLTCGQCRTTLMHPPGASTVQCATCRYVNHV).

It localises to the nucleus. Its function is as follows. Putative zinc finger that may be involved in programmed cell death and defense response. This is Protein LOL4 (LOL4) from Oryza sativa subsp. japonica (Rice).